The sequence spans 770 residues: Glutamate carboxypeptidase 2 homolog (770 aa).

Over 1–19 (MPYVGVGAQKASTNLTGGP) the chain is Cytoplasmic. A helical; Signal-anchor for type II membrane protein transmembrane segment spans residues 20 to 40 (MMKAYAFVLAFFLLGLGVLAL). At 41–770 (GKHHSGRRFN…CVVNTLRDVI (730 aa)) the chain is on the extracellular side. N-linked (GlcNAc...) asparagine glycosylation is found at asparagine 175 and asparagine 337. Residues 282–597 (SKKELFKGRT…QYWAELAKTF (316 aa)) form a catalytic region. Zn(2+) is bound by residues histidine 387 and aspartate 397. Residue asparagine 417 is glycosylated (N-linked (GlcNAc...) asparagine). Glutamate 435 serves as the catalytic Nucleophile. Residues glutamate 436 and aspartate 464 each coordinate Zn(2+). Asparagine 469 and asparagine 551 each carry an N-linked (GlcNAc...) asparagine glycan. Histidine 562 provides a ligand contact to Zn(2+). 2 N-linked (GlcNAc...) asparagine glycosylation sites follow: asparagine 606 and asparagine 630.

The protein belongs to the peptidase M28 family. M28B subfamily. The cofactor is Zn(2+).

Its subcellular location is the membrane. The catalysed reaction is Release of an unsubstituted, C-terminal glutamyl residue, typically from Ac-Asp-Glu or folylpoly-gamma-glutamates.. The chain is Glutamate carboxypeptidase 2 homolog from Caenorhabditis briggsae.